A 242-amino-acid polypeptide reads, in one-letter code: MTHSPLAQFDIKKLIDIKMFGFDVSFTNSSIYMLLASILALTYFYLAFYNRKLVPSRLQVSAEIVYNLVADMLNQNIGVKGRKFIPLVFSLFIFILFCNLLGMTPYSFTTTSHIIVTFTLAILVFLMVTIVGFVKHGLRFLTLFLPHGTPLWLAPLMIVIELFTYLARPVSLSLRLAANMMAGHVLLKVIAGFTVSLMIYLKFLPIPIMVILIGFEIFVAILQAYIFTILSCMYLNDAINLH.

6 consecutive transmembrane segments (helical) span residues 29 to 49 (SSIY…LAFY), 84 to 104 (FIPL…LGMT), 114 to 134 (IIVT…VGFV), 140 to 160 (FLTL…MIVI), 181 to 201 (MAGH…MIYL), and 203 to 223 (FLPI…AILQ).

This sequence belongs to the ATPase A chain family. As to quaternary structure, F-type ATPases have 2 components, CF(1) - the catalytic core - and CF(0) - the membrane proton channel. CF(1) has five subunits: alpha(3), beta(3), gamma(1), delta(1), epsilon(1). CF(0) has three main subunits: a(1), b(2) and c(9-12). The alpha and beta chains form an alternating ring which encloses part of the gamma chain. CF(1) is attached to CF(0) by a central stalk formed by the gamma and epsilon chains, while a peripheral stalk is formed by the delta and b chains.

It is found in the cell inner membrane. In terms of biological role, key component of the proton channel; it plays a direct role in the translocation of protons across the membrane. This chain is ATP synthase subunit a, found in Rickettsia conorii (strain ATCC VR-613 / Malish 7).